The following is a 355-amino-acid chain: Probable butyrate kinase (355 aa).

It belongs to the acetokinase family.

The protein resides in the cytoplasm. It carries out the reaction butanoate + ATP = butanoyl phosphate + ADP. In Listeria monocytogenes serovar 1/2a (strain ATCC BAA-679 / EGD-e), this protein is Probable butyrate kinase.